We begin with the raw amino-acid sequence, 345 residues long: Selenide, water dikinase (345 aa).

Cysteine 16 is a catalytic residue. ATP is bound by residues lysine 19 and 46 to 48 (TSD). Position 49 (aspartate 49) interacts with Mg(2+). Residues aspartate 66, aspartate 89, and 136–138 (GHT) contribute to the ATP site. Residue aspartate 89 coordinates Mg(2+). Aspartate 224 serves as a coordination point for Mg(2+).

Belongs to the selenophosphate synthase 1 family. Class I subfamily. In terms of assembly, homodimer. Mg(2+) is required as a cofactor.

The catalysed reaction is hydrogenselenide + ATP + H2O = selenophosphate + AMP + phosphate + 2 H(+). Synthesizes selenophosphate from selenide and ATP. The protein is Selenide, water dikinase of Clostridium botulinum (strain Eklund 17B / Type B).